The chain runs to 314 residues: Lipoyl synthase (314 aa).

Cysteine 67, cysteine 72, cysteine 78, cysteine 93, cysteine 97, cysteine 100, and serine 306 together coordinate [4Fe-4S] cluster. The Radical SAM core domain maps to 79 to 295; it reads FNRGTATFMI…KNYALSIGFK (217 aa).

It belongs to the radical SAM superfamily. Lipoyl synthase family. [4Fe-4S] cluster serves as cofactor.

The protein resides in the cytoplasm. The enzyme catalyses [[Fe-S] cluster scaffold protein carrying a second [4Fe-4S](2+) cluster] + N(6)-octanoyl-L-lysyl-[protein] + 2 oxidized [2Fe-2S]-[ferredoxin] + 2 S-adenosyl-L-methionine + 4 H(+) = [[Fe-S] cluster scaffold protein] + N(6)-[(R)-dihydrolipoyl]-L-lysyl-[protein] + 4 Fe(3+) + 2 hydrogen sulfide + 2 5'-deoxyadenosine + 2 L-methionine + 2 reduced [2Fe-2S]-[ferredoxin]. Its pathway is protein modification; protein lipoylation via endogenous pathway; protein N(6)-(lipoyl)lysine from octanoyl-[acyl-carrier-protein]: step 2/2. Functionally, catalyzes the radical-mediated insertion of two sulfur atoms into the C-6 and C-8 positions of the octanoyl moiety bound to the lipoyl domains of lipoate-dependent enzymes, thereby converting the octanoylated domains into lipoylated derivatives. This is Lipoyl synthase from Buchnera aphidicola subsp. Baizongia pistaciae (strain Bp).